The sequence spans 212 residues: 2-C-methyl-D-erythritol 4-phosphate cytidylyltransferase (212 aa).

This sequence belongs to the IspD/TarI cytidylyltransferase family. IspD subfamily.

It carries out the reaction 2-C-methyl-D-erythritol 4-phosphate + CTP + H(+) = 4-CDP-2-C-methyl-D-erythritol + diphosphate. It functions in the pathway isoprenoid biosynthesis; isopentenyl diphosphate biosynthesis via DXP pathway; isopentenyl diphosphate from 1-deoxy-D-xylulose 5-phosphate: step 2/6. In terms of biological role, catalyzes the formation of 4-diphosphocytidyl-2-C-methyl-D-erythritol from CTP and 2-C-methyl-D-erythritol 4-phosphate (MEP). This chain is 2-C-methyl-D-erythritol 4-phosphate cytidylyltransferase, found in Chlamydia felis (strain Fe/C-56) (Chlamydophila felis).